Reading from the N-terminus, the 609-residue chain is Actin-interacting protein 1-2 (609 aa).

WD repeat units lie at residues 2 to 42 (ELSE…VTLD), 54 to 93 (EHAYPATVARYSPNGEWIASGDVSGTVRIWGAYNDHVLKN), 97 to 141 (VLAG…GEFD), 142 to 182 (GHSR…FKLS), 185 to 224 (EHSNFVNCVRFAPDGSKFITVSSDKKGIIYDGKTCEILGE), 230 to 269 (GHKGSIYAVSWSPDGKQVLTVSADKSAKIWDISDNGSGSL), 277 to 318 (GSSG…KSPF), 322 to 362 (GHMK…CGKL), 445 to 484 (NLGFIVTALAVTPDGTEAVIGGQDGKLHLYSINGDSLTEE), 489 to 528 (RHRGAISVIRYSPDLSMFASADLNREAVVWDRVSREMKLK), 532 to 571 (YHSARINCLAWSPNSTMVATGSLDTCVIVYEVDKPASSRM), and 576 to 609 (AHLGGVYGLGFADDSHVVSSGEDACIRVWSFTPQ).

As to expression, expressed in leaves, stems, flower buds and flowers.

Its function is as follows. Binds actin. Enhances the F-actin depolymerization activity of actin-depolymerizing factor (ADF) proteins. The chain is Actin-interacting protein 1-2 from Arabidopsis thaliana (Mouse-ear cress).